Consider the following 310-residue polypeptide: Delta(1)-pyrroline-2-carboxylate reductase 1 (310 aa).

Belongs to the ornithine cyclodeaminase/mu-crystallin family.

The enzyme catalyses L-proline + NAD(+) = 1-pyrroline-2-carboxylate + NADH + H(+). It catalyses the reaction L-proline + NADP(+) = 1-pyrroline-2-carboxylate + NADPH + H(+). Catalyzes the reduction of Delta(1)-pyrroline-2-carboxylate (Pyr2C) to L-proline, using NADPH as the electron donor. May be involved in a degradation pathway that converts trans-3-hydroxy-L-proline (t3LHyp) to L-proline. The chain is Delta(1)-pyrroline-2-carboxylate reductase 1 from Burkholderia multivorans (strain ATCC 17616 / 249).